Consider the following 674-residue polypeptide: Membrane-anchored lipid-binding protein LAM5 (674 aa).

Disordered regions lie at residues 1-52 (MSDV…LNTE) and 65-151 (NQSA…GSPL). The Cytoplasmic segment spans residues 1-633 (MSDVDNWEPV…AEQQGLKVTM (633 aa)). Residues 69–81 (ADEHPTEIKHDQS) show a composition bias toward basic and acidic residues. Over residues 82-119 (RTSSTSSFFSGMISSFKSNVPSPVSRSTTPTSPVSQPS) the composition is skewed to low complexity. A Phosphothreonine modification is found at Thr-110. Phosphoserine is present on residues Ser-113 and Ser-140. Position 143 is a phosphothreonine (Thr-143). Ser-149 carries the post-translational modification Phosphoserine. One can recognise a GRAM domain in the interval 198 to 264 (KDFHETFKSV…FEDVTFMEKT (67 aa)). The span at 336 to 357 (IDEENNDKDANDNDTNENDDEN) shows a compositional bias: acidic residues. Residues 336–380 (IDEENNDKDANDNDTNENDDENISTNETTPNSTSSSPDKEKEKAY) are disordered. Over residues 358–371 (ISTNETTPNSTSSS) the composition is skewed to low complexity. One can recognise a VASt domain in the interval 409–582 (NEFVLKELPF…ILSKFIKNNV (174 aa)). Residues 634-654 (ETWLFLYLIVVVLLLFNLFYI) form a helical membrane-spanning segment. The Lumenal portion of the chain corresponds to 655 to 674 (RSIAVSLHQLVKLQLVELKL).

The protein belongs to the YSP2 family.

The protein resides in the endoplasmic reticulum membrane. In terms of biological role, may be involved in sterol transfer between intracellular membranes. The chain is Membrane-anchored lipid-binding protein LAM5 from Saccharomyces cerevisiae (strain ATCC 204508 / S288c) (Baker's yeast).